Reading from the N-terminus, the 73-residue chain is Large ribosomal subunit protein bL31 (73 aa).

The protein belongs to the bacterial ribosomal protein bL31 family. Type A subfamily. In terms of assembly, part of the 50S ribosomal subunit.

In terms of biological role, binds the 23S rRNA. The chain is Large ribosomal subunit protein bL31 from Synechococcus sp. (strain JA-3-3Ab) (Cyanobacteria bacterium Yellowstone A-Prime).